The sequence spans 246 residues: Probable transcriptional regulatory protein YebC (246 aa).

The segment at 1 to 20 is disordered; that stretch reads MAGHSKWANTRHRKAAQDAK.

Belongs to the TACO1 family.

The protein resides in the cytoplasm. This is Probable transcriptional regulatory protein YebC from Shigella flexneri.